Reading from the N-terminus, the 304-residue chain is MQSQPDNVAYPMELQAVNKDGTVEVRVQGNDDSSNRKHEVAEAQEKPVGGINFWAPRELRLNYRDYMGELLGTFVLLFMGNGVVATVIIDGKLGFLSITLGWGIAVTMALYVSLGISSGHLNPAVTVGNAVFGDFPWRKVPGYIAAQMLGAFLGAACAYGVFADLLKAHGGGELIAFGEKGTAGVFSTYPRDSNGLFSCIFGEFICTAMLLFCVCGIFDPNNSPAKGHEPLAVGALVFAIGNNIGYSTGYAINPARDFGPRVFSSFLYGGEVFSHANYYFWVPLVIPLFGGIFGLFLYKYFVPH.

Residues 1–68 (MQSQPDNVAY…LRLNYRDYMG (68 aa)) are Cytoplasmic-facing. A helical transmembrane segment spans residues 69-89 (ELLGTFVLLFMGNGVVATVII). Residues 90–95 (DGKLGF) lie on the Extracellular side of the membrane. Residues 96-116 (LSITLGWGIAVTMALYVSLGI) form a helical membrane-spanning segment. Residues 117 to 142 (SSGHLNPAVTVGNAVFGDFPWRKVPG) lie on the Cytoplasmic side of the membrane. The chain crosses the membrane as a helical span at residues 143-163 (YIAAQMLGAFLGAACAYGVFA). Topologically, residues 164 to 196 (DLLKAHGGGELIAFGEKGTAGVFSTYPRDSNGL) are extracellular. Residues 197–217 (FSCIFGEFICTAMLLFCVCGI) traverse the membrane as a helical segment. At 218–231 (FDPNNSPAKGHEPL) the chain is on the cytoplasmic side. The chain crosses the membrane as a helical span at residues 232–252 (AVGALVFAIGNNIGYSTGYAI). Residues 253–277 (NPARDFGPRVFSSFLYGGEVFSHAN) are Extracellular-facing. Residues 278-298 (YYFWVPLVIPLFGGIFGLFLY) traverse the membrane as a helical segment. Residues 299–304 (KYFVPH) lie on the Cytoplasmic side of the membrane.

The protein belongs to the MIP/aquaporin (TC 1.A.8) family.

The protein localises to the cell membrane. It catalyses the reaction glycerol(in) = glycerol(out). The catalysed reaction is H2O(in) = H2O(out). It carries out the reaction urea(in) = urea(out). Functionally, mediates water and glycerol transport across the cell membrane. Permeable to urea. Permeable to methylamine/methylammonium. Permeable to dihydroxyacetone. Permeable to erythritol and ribitol. This is Aquaglyceroporin-3 from Trypanosoma brucei brucei.